The primary structure comprises 538 residues: Phosphoenolpyruvate carboxykinase (ATP) (538 aa).

The substrate site is built by Arg64, Tyr206, and Lys212. Residues Lys212, His231, and 247-255 contribute to the ATP site; that span reads GLSGTGKTT. Lys212 and His231 together coordinate Mn(2+). Asp268 contacts Mn(2+). ATP contacts are provided by residues Glu296, Arg332, 448 to 449, and Thr454; that span reads RI. Arg332 is a substrate binding site.

Belongs to the phosphoenolpyruvate carboxykinase (ATP) family. Monomer. It depends on Mn(2+) as a cofactor.

It is found in the cytoplasm. It carries out the reaction oxaloacetate + ATP = phosphoenolpyruvate + ADP + CO2. It participates in carbohydrate biosynthesis; gluconeogenesis. Functionally, involved in the gluconeogenesis. Catalyzes the conversion of oxaloacetate (OAA) to phosphoenolpyruvate (PEP) through direct phosphoryl transfer between the nucleoside triphosphate and OAA. This is Phosphoenolpyruvate carboxykinase (ATP) from Enterobacter sp. (strain 638).